We begin with the raw amino-acid sequence, 33 residues long: Cysteine-rich venom protein (33 aa).

A disordered region spans residues 1 to 33 (NVDFNSESTRRKKKQKEIVDLHNSLRRRVSPTA). Basic residues predominate over residues 24–33 (SLRRRVSPTA).

The protein belongs to the CRISP family. Post-translationally, contains 8 disulfide bonds. Expressed by the venom gland.

It localises to the secreted. In terms of biological role, blocks contraction of smooth muscle elicited by high potassium-induced depolarization, but does not block caffeine-stimulated contraction. May target voltage-gated calcium channels on smooth muscle (Cav). This Naja naja (Indian cobra) protein is Cysteine-rich venom protein.